The chain runs to 565 residues: Deformed epidermal autoregulatory factor 1 homolog (565 aa).

2 disordered regions span residues 34–62 (GGEA…ETPR) and 162–190 (GLKG…KGGT). Positions 169–181 (PLTPGPQSPPTPL) are enriched in pro residues. A Phosphothreonine modification is found at Thr171. A Phosphoserine modification is found at Ser176. The residue at position 179 (Thr179) is a Phosphothreonine. Residues 193–273 (NWDPSVYDSE…QCLIQDGILN (81 aa)) form the SAND domain. Residues 301-316 (KRRKKENELPTTPVKK) carry the Nuclear localization signal motif. An interaction with LMO4 region spans residues 403-478 (IAPFPEAALP…QLKTLFEQAK (76 aa)). Thr432 carries the post-translational modification Phosphothreonine. The residue at position 448 (Ser448) is a Phosphoserine. Zn(2+) contacts are provided by Cys504, Cys507, Cys515, Cys518, Cys524, Cys528, His536, and Cys540. The segment at 504-540 (CVNCGREAMSECTGCHKVNYCSTFCQRKDWKDHQHIC) adopts an MYND-type zinc-finger fold.

In terms of assembly, homodimer. Isoform 1 and isoform 4 may form a heterodimer. Interacts with LMO2 and CLIM2. Interacts with LMO4; LMO4 blocks export from nucleus. May interact with the corepressors NCOR1 and NCRO2. Identified in a complex with the XRCC5 and XRCC6 heterodimer. Interacts (via the SAND domain) with the DNA-PK complex subunit XRCC6; the interaction is direct and may be inhibited by DNA-binding. In terms of processing, may be phosphorylated by DNA-PK complex in a DNA independent manner (in vitro). Expressed in various tissues and cells such as in peripheral mononuclear cells and hormone-secreting pituitary cells. Expression in pancreatic lymph nodes of patients with type 1 diabetes is 20 times higher than in healthy controls. Highly expressed in fetal and adult brain.

The protein resides in the nucleus. It is found in the cytoplasm. The protein localises to the secreted. Its function is as follows. Transcription factor that binds to sequence with multiple copies of 5'-TTC[CG]G-3' present in its own promoter and that of the HNRPA2B1 gene. Down-regulates transcription of these genes. Binds to the retinoic acid response element (RARE) 5'-AGGGTTCACCGAAAGTTCA-3'. Activates the proenkephalin gene independently of promoter binding, probably through protein-protein interaction. When secreted, behaves as an inhibitor of cell proliferation, by arresting cells in the G0 or G1 phase. Required for neural tube closure and skeletal patterning. Regulates epithelial cell proliferation and side-branching in the mammary gland. Controls the expression of peripheral tissue antigens in pancreatic lymph nodes. Isoform 1 displays greater transcriptional activity than isoform 4. Isoform 4 may inhibit transcriptional activity of isoform 1 by interacting with isoform 1 and retaining it in the cytoplasm. Transcriptional activator of EIF4G3. In Homo sapiens (Human), this protein is Deformed epidermal autoregulatory factor 1 homolog (DEAF1).